The sequence spans 175 residues: NADH-ubiquinone oxidoreductase chain 6 (175 aa).

A run of 6 helical transmembrane segments spans residues methionine 1–serine 21, serine 24–methionine 44, leucine 51–isoleucine 71, valine 87–phenylalanine 107, glutamate 112–phenylalanine 132, and cysteine 148–threonine 168.

The protein belongs to the complex I subunit 6 family. As to quaternary structure, core subunit of respiratory chain NADH dehydrogenase (Complex I) which is composed of 45 different subunits.

Its subcellular location is the mitochondrion inner membrane. It carries out the reaction a ubiquinone + NADH + 5 H(+)(in) = a ubiquinol + NAD(+) + 4 H(+)(out). Functionally, core subunit of the mitochondrial membrane respiratory chain NADH dehydrogenase (Complex I) which catalyzes electron transfer from NADH through the respiratory chain, using ubiquinone as an electron acceptor. Essential for the catalytic activity and assembly of complex I. The sequence is that of NADH-ubiquinone oxidoreductase chain 6 (MT-ND6) from Elephas maximus (Indian elephant).